Consider the following 115-residue polypeptide: Large ribosomal subunit protein bL20c (115 aa).

The protein belongs to the bacterial ribosomal protein bL20 family.

The protein localises to the plastid. Its subcellular location is the chloroplast. Functionally, binds directly to 23S ribosomal RNA and is necessary for the in vitro assembly process of the 50S ribosomal subunit. It is not involved in the protein synthesizing functions of that subunit. The protein is Large ribosomal subunit protein bL20c of Chlorokybus atmophyticus (Soil alga).